A 538-amino-acid chain; its full sequence is Protein BFR2 (538 aa).

Residues 1–239 are disordered; sequence MVKAKGRAKE…AKPMMAALST (239 aa). Positions 7-23 are enriched in basic and acidic residues; that stretch reads RAKEFQDPDEPITKDYD. 2 stretches are compositionally biased toward acidic residues: residues 80 to 105 and 172 to 222; these read LEEE…PETA and DSED…DEED. The stretch at 290-363 forms a coiled coil; it reads YEAAEEAAIK…KWSRKVQSVN (74 aa).

It belongs to the AATF family.

The protein resides in the nucleus. It is found in the nucleolus. The protein is Protein BFR2 (BFR2) of Gibberella zeae (strain ATCC MYA-4620 / CBS 123657 / FGSC 9075 / NRRL 31084 / PH-1) (Wheat head blight fungus).